The primary structure comprises 206 residues: Large ribosomal subunit protein uL4 (206 aa).

The span at 48-59 (THDTKTRSEVRG) shows a compositional bias: basic and acidic residues. Positions 48–77 (THDTKTRSEVRGGGRKPWRQKGTGRARHGS) are disordered. The segment covering 60–77 (GGRKPWRQKGTGRARHGS) has biased composition (basic residues).

This sequence belongs to the universal ribosomal protein uL4 family. In terms of assembly, part of the 50S ribosomal subunit.

One of the primary rRNA binding proteins, this protein initially binds near the 5'-end of the 23S rRNA. It is important during the early stages of 50S assembly. It makes multiple contacts with different domains of the 23S rRNA in the assembled 50S subunit and ribosome. Functionally, forms part of the polypeptide exit tunnel. The sequence is that of Large ribosomal subunit protein uL4 from Pelotomaculum thermopropionicum (strain DSM 13744 / JCM 10971 / SI).